Here is a 521-residue protein sequence, read N- to C-terminus: Bifunctional purine biosynthesis protein PurH (521 aa).

The MGS-like domain occupies 1-145; the sequence is MIKQALISVS…KNHRDVTVVV (145 aa).

The protein belongs to the PurH family.

The enzyme catalyses (6R)-10-formyltetrahydrofolate + 5-amino-1-(5-phospho-beta-D-ribosyl)imidazole-4-carboxamide = 5-formamido-1-(5-phospho-D-ribosyl)imidazole-4-carboxamide + (6S)-5,6,7,8-tetrahydrofolate. The catalysed reaction is IMP + H2O = 5-formamido-1-(5-phospho-D-ribosyl)imidazole-4-carboxamide. Its pathway is purine metabolism; IMP biosynthesis via de novo pathway; 5-formamido-1-(5-phospho-D-ribosyl)imidazole-4-carboxamide from 5-amino-1-(5-phospho-D-ribosyl)imidazole-4-carboxamide (10-formyl THF route): step 1/1. The protein operates within purine metabolism; IMP biosynthesis via de novo pathway; IMP from 5-formamido-1-(5-phospho-D-ribosyl)imidazole-4-carboxamide: step 1/1. The chain is Bifunctional purine biosynthesis protein PurH from Burkholderia ambifaria (strain ATCC BAA-244 / DSM 16087 / CCUG 44356 / LMG 19182 / AMMD) (Burkholderia cepacia (strain AMMD)).